Consider the following 137-residue polypeptide: SPbeta prophage-derived disulfide bond formation protein A (137 aa).

The first 25 residues, 1–25 (MKKWIVLFLVLIAAAISIFVYVSTG), serve as a signal peptide directing secretion. Residues 26 to 136 (SEKPFYNDIN…IEKFFDKNGD (111 aa)) form the Thioredoxin domain. Cys-58 and Cys-61 form a disulfide bridge.

Belongs to the thioredoxin family.

Its subcellular location is the secreted. In terms of biological role, unknown; dispensable for production of the lantibiotic sublancin 168 and for competence for DNA uptake. In Bacillus subtilis (strain 168), this protein is SPbeta prophage-derived disulfide bond formation protein A (bdbA).